We begin with the raw amino-acid sequence, 98 residues long: Co-chaperonin GroES (98 aa).

Belongs to the GroES chaperonin family. In terms of assembly, heptamer of 7 subunits arranged in a ring. Interacts with the chaperonin GroEL.

It is found in the cytoplasm. Functionally, together with the chaperonin GroEL, plays an essential role in assisting protein folding. The GroEL-GroES system forms a nano-cage that allows encapsulation of the non-native substrate proteins and provides a physical environment optimized to promote and accelerate protein folding. GroES binds to the apical surface of the GroEL ring, thereby capping the opening of the GroEL channel. The sequence is that of Co-chaperonin GroES from Corynebacterium diphtheriae (strain ATCC 700971 / NCTC 13129 / Biotype gravis).